The chain runs to 569 residues: Protein germ cell-less (569 aa).

Residues 17-43 are disordered; the sequence is SNRRKRKRSTDSSLGKDDPAQLDTTQP. The 71-residue stretch at 66 to 136 folds into the BTB domain; sequence SDVAVMALDK…MYSDEIEIES (71 aa). Positions 517-553 are disordered; the sequence is GANSDRPLSPSSADDSAVFIGDSEPSTPSSPAPRPRI.

The protein localises to the cytoplasm. In terms of biological role, required for the specification of pole cells and germ cell formation. Mothers with reduced glc function give rise to sterile adult progeny that lack germ cells. This Drosophila melanogaster (Fruit fly) protein is Protein germ cell-less (gcl).